Reading from the N-terminus, the 962-residue chain is Leucine--tRNA ligase (962 aa).

The 'HIGH' region signature appears at 40 to 51; it reads PYPSGAGLHVGH. The tract at residues 548 to 570 is disordered; sequence SRKLSGQHDEPNSNVTPSAVEGS. The 'KMSKS' region signature appears at 737–741; that stretch reads KMSKS. An ATP-binding site is contributed by Lys740.

This sequence belongs to the class-I aminoacyl-tRNA synthetase family.

The protein resides in the cytoplasm. It carries out the reaction tRNA(Leu) + L-leucine + ATP = L-leucyl-tRNA(Leu) + AMP + diphosphate. In Christiangramia forsetii (strain DSM 17595 / CGMCC 1.15422 / KT0803) (Gramella forsetii), this protein is Leucine--tRNA ligase.